The following is a 151-amino-acid chain: MGTNLPTEVGQILSAPTSIDYNYPTTGVWDASYDICLDSTPKTTGVNQQEIMIWFNHQGSIQPVGSPVGNTTIEGKNFVVWDGSNGMNNAMAYVATEPIEVWSFDVMSFVDHTATMEPITDSWYLTSIRAGLEPWSDGVGLGVDSFSAKVN.

Residues Glu50 and Glu133 contribute to the active site.

It belongs to the glycosyl hydrolase 12 (cellulase H) family.

Functionally, probable cellulase. Can hydrolyze barley beta-glucan in vitro. Could be important for the survival of M.tuberculosis in the environment, perhaps in amoebal hosts. In Mycobacterium tuberculosis (strain ATCC 25618 / H37Rv), this protein is Probable cellulase Cel12b.